A 330-amino-acid chain; its full sequence is Elongation factor Ts (330 aa).

The involved in Mg(2+) ion dislocation from EF-Tu stretch occupies residues 79-82; the sequence is TDFV.

Belongs to the EF-Ts family.

The protein localises to the cytoplasm. Its function is as follows. Associates with the EF-Tu.GDP complex and induces the exchange of GDP to GTP. It remains bound to the aminoacyl-tRNA.EF-Tu.GTP complex up to the GTP hydrolysis stage on the ribosome. This Bacteroides fragilis (strain ATCC 25285 / DSM 2151 / CCUG 4856 / JCM 11019 / LMG 10263 / NCTC 9343 / Onslow / VPI 2553 / EN-2) protein is Elongation factor Ts.